The chain runs to 101 residues: Small ribosomal subunit protein uS14 (101 aa).

This sequence belongs to the universal ribosomal protein uS14 family. As to quaternary structure, part of the 30S ribosomal subunit. Contacts proteins S3 and S10.

In terms of biological role, binds 16S rRNA, required for the assembly of 30S particles and may also be responsible for determining the conformation of the 16S rRNA at the A site. The chain is Small ribosomal subunit protein uS14 from Shewanella sp. (strain ANA-3).